Here is a 319-residue protein sequence, read N- to C-terminus: L-lactate dehydrogenase (319 aa).

Residues valine 11, aspartate 32, arginine 37, tyrosine 62, and 76–77 (GV) contribute to the NAD(+) site. Residues glutamine 79, arginine 85, and 117–120 (NPVD) contribute to the substrate site. NAD(+)-binding positions include 115-117 (VTN) and serine 140. 145–148 (DTAR) contributes to the substrate binding site. Arginine 150 and histidine 165 together coordinate beta-D-fructose 1,6-bisphosphate. The Proton acceptor role is filled by histidine 172. Tyrosine 217 carries the phosphotyrosine modification. Threonine 226 is a substrate binding site.

Belongs to the LDH/MDH superfamily. LDH family. Homotetramer.

It localises to the cytoplasm. The enzyme catalyses (S)-lactate + NAD(+) = pyruvate + NADH + H(+). It participates in fermentation; pyruvate fermentation to lactate; (S)-lactate from pyruvate: step 1/1. Its activity is regulated as follows. Allosterically activated by fructose 1,6-bisphosphate (FBP). Functionally, catalyzes the conversion of lactate to pyruvate. The sequence is that of L-lactate dehydrogenase from Thermotoga sp. (strain RQ2).